The chain runs to 396 residues: NADH-quinone oxidoreductase subunit D (396 aa).

This sequence belongs to the complex I 49 kDa subunit family. As to quaternary structure, NDH-1 is composed of 14 different subunits. Subunits NuoB, C, D, E, F, and G constitute the peripheral sector of the complex.

The protein resides in the cell inner membrane. It carries out the reaction a quinone + NADH + 5 H(+)(in) = a quinol + NAD(+) + 4 H(+)(out). In terms of biological role, NDH-1 shuttles electrons from NADH, via FMN and iron-sulfur (Fe-S) centers, to quinones in the respiratory chain. The immediate electron acceptor for the enzyme in this species is believed to be ubiquinone. Couples the redox reaction to proton translocation (for every two electrons transferred, four hydrogen ions are translocated across the cytoplasmic membrane), and thus conserves the redox energy in a proton gradient. This Rhizobium johnstonii (strain DSM 114642 / LMG 32736 / 3841) (Rhizobium leguminosarum bv. viciae) protein is NADH-quinone oxidoreductase subunit D.